Reading from the N-terminus, the 263-residue chain is Putative hydro-lyase BPUM_0381 (263 aa).

This sequence belongs to the D-glutamate cyclase family.

This chain is Putative hydro-lyase BPUM_0381, found in Bacillus pumilus (strain SAFR-032).